The chain runs to 262 residues: Ninja-family protein 2 (262 aa).

Residues 49 to 70 (RNSLACNTSKEAAGQSPKEMNA) form a disordered region.

It belongs to the Ninja family.

The protein resides in the nucleus. The chain is Ninja-family protein 2 from Zea mays (Maize).